The chain runs to 619 residues: E3 ubiquitin-protein ligase complex SLX5-SLX8 subunit SLX5 (619 aa).

Residues 1-23 (MHSDTNGRTKSNNSPSDNNPNET) are disordered. Over residues 11–21 (SNNSPSDNNPN) the composition is skewed to low complexity. S14 and S29 each carry phosphoserine. Positions 63–90 (VRSDSRSRNSQRTHITASSERPDFQANN) are disordered. Positions 70 to 90 (RNSQRTHITASSERPDFQANN) are enriched in polar residues. The interval 201–335 (SRRQLLRRSA…ALFTEFRNQL (135 aa)) is EUC1 interaction domain.

As to quaternary structure, component of the heterodimeric SUMO-targeted ubiquitin ligase (STUbL) complex composed of SLX5 and SLX8. Interacts with sirtuin SIR2. Interacts with KAR9. Interacts with EUC1.

The protein resides in the nucleus. Its subcellular location is the chromosome. It localises to the centromere. It is found in the kinetochore. The enzyme catalyses S-ubiquitinyl-[E2 ubiquitin-conjugating enzyme]-L-cysteine + [acceptor protein]-L-lysine = [E2 ubiquitin-conjugating enzyme]-L-cysteine + N(6)-ubiquitinyl-[acceptor protein]-L-lysine.. Its pathway is protein modification; protein ubiquitination. Component of the SUMO-targeted ubiquitin ligase (STUbL) complex SLX5/SLX8 that mediates ubiquitination and subsequent desumoylation of sumoylated proteins and proteins containing SUMO-like domains for their degradation. The STUbL complex SLX5/SLX8 stimulates ubiquitin conjugating enzymes, including UBC1, UBC4, UBC5 and UBC13-MMS2, and mediates the proteolytic down-regulation of sumoylated proteins. The STUbL complex SLX5/SLX8 is involved in ubiquitin-mediated degradation of histone variant CSE4, preventing mislocalization to euchromatin. The complex plays an essential role in maintenance of chromosome stability and links SUMO-dependent ubiquitination to a centromere-specific function during mitosis. The complex is involved in proteolysis of spindle positioning protein KAR9 and ensures correct spindle function by regulating levels of microtubule-associated proteins. During replication, the complex helps prevent DNA lesions via recombination and has a role in localizing the DNA damage protein DCD2. The complex especially ubiquitinates the nuclease YEN1 and prevents persistent accumulation of a fraction of YEN1 associated with sites of activity in late G2/M and helps maintain the balance between pro- and anti-crossover pathways during homologous recombination. It is also involved in ubiquitin-mediated degradation of DNA repair proteins RAD52 and RAD57. Along with SIR2, promotes silencing of genes at telomeric or ribosomal DNA (rDNA) loci. Finally, the complex is recruited to distinct genomic hotspots of non-H2B protein ubiquitination (ub-hotspots) by the sumoylated transcription factor-like protein EUC1 where it ubiquitinates EUC1 and presumably other targets. The sequence is that of E3 ubiquitin-protein ligase complex SLX5-SLX8 subunit SLX5 (SLX5) from Saccharomyces cerevisiae (strain ATCC 204508 / S288c) (Baker's yeast).